A 191-amino-acid chain; its full sequence is NADH-quinone oxidoreductase subunit B (191 aa).

The [4Fe-4S] cluster site is built by C52, C53, C118, and C148.

This sequence belongs to the complex I 20 kDa subunit family. NDH-1 is composed of 14 different subunits. Subunits NuoB, C, D, E, F, and G constitute the peripheral sector of the complex. It depends on [4Fe-4S] cluster as a cofactor.

The protein resides in the cell inner membrane. It carries out the reaction a quinone + NADH + 5 H(+)(in) = a quinol + NAD(+) + 4 H(+)(out). Functionally, NDH-1 shuttles electrons from NADH, via FMN and iron-sulfur (Fe-S) centers, to quinones in the respiratory chain. The immediate electron acceptor for the enzyme in this species is believed to be a menaquinone. Couples the redox reaction to proton translocation (for every two electrons transferred, four hydrogen ions are translocated across the cytoplasmic membrane), and thus conserves the redox energy in a proton gradient. The polypeptide is NADH-quinone oxidoreductase subunit B (Azobacteroides pseudotrichonymphae genomovar. CFP2).